The chain runs to 181 residues: Deoxyuridine 5'-triphosphate nucleotidohydrolase (181 aa).

Residues 96-98 (RSG), N109, 113-115 (TVD), and K123 contribute to the substrate site.

It belongs to the dUTPase family. Requires Mg(2+) as cofactor.

The catalysed reaction is dUTP + H2O = dUMP + diphosphate + H(+). It participates in pyrimidine metabolism; dUMP biosynthesis; dUMP from dCTP (dUTP route): step 2/2. In terms of biological role, this enzyme is involved in nucleotide metabolism: it produces dUMP, the immediate precursor of thymidine nucleotides and it decreases the intracellular concentration of dUTP so that uracil cannot be incorporated into DNA. The chain is Deoxyuridine 5'-triphosphate nucleotidohydrolase from Corynebacterium efficiens (strain DSM 44549 / YS-314 / AJ 12310 / JCM 11189 / NBRC 100395).